The sequence spans 831 residues: Serine/threonine-protein kinase ATG1 (831 aa).

The Protein kinase domain maps to 21–321 (YSVEKEIGKG…FTDFFNNEVV (301 aa)). Residues 27–35 (IGKGSFAVV) and Lys50 contribute to the ATP site. The Proton acceptor role is filled by Asp168. 2 stretches are compositionally biased toward polar residues: residues 360–382 (QQES…TGVR) and 405–419 (NSQN…ASQK). The disordered stretch occupies residues 360-419 (QQESAHIPPTQTDENTSVQTGVRRTSGKERLATNHPPHQQIHPEDNSQNPEQSYQSASQK).

This sequence belongs to the protein kinase superfamily. Ser/Thr protein kinase family. APG1/unc-51/ULK1 subfamily. Homodimer. Forms a ternary complex with ATG13 and ATG17.

Its subcellular location is the cytoplasm. It localises to the preautophagosomal structure membrane. The enzyme catalyses L-seryl-[protein] + ATP = O-phospho-L-seryl-[protein] + ADP + H(+). The catalysed reaction is L-threonyl-[protein] + ATP = O-phospho-L-threonyl-[protein] + ADP + H(+). Serine/threonine protein kinase involved in the cytoplasm to vacuole transport (Cvt) and found to be essential in autophagy, where it is required for the formation of autophagosomes. Involved in the clearance of protein aggregates which cannot be efficiently cleared by the proteasome. Required for selective autophagic degradation of the nucleus (nucleophagy) as well as for mitophagy which contributes to regulate mitochondrial quantity and quality by eliminating the mitochondria to a basal level to fulfill cellular energy requirements and preventing excess ROS production. Also involved in endoplasmic reticulum-specific autophagic process, in selective removal of ER-associated degradation (ERAD) substrates. Plays a key role in ATG9 and ATG23 cycling through the pre-autophagosomal structure and is necessary to promote ATG18 binding to ATG9 through phosphorylation of ATG9. Catalyzes phosphorylation of ATG4, decreasing the interaction between ATG4 and ATG8 and impairing deconjugation of PE-conjugated forms of ATG8. This Kluyveromyces lactis (strain ATCC 8585 / CBS 2359 / DSM 70799 / NBRC 1267 / NRRL Y-1140 / WM37) (Yeast) protein is Serine/threonine-protein kinase ATG1.